The primary structure comprises 167 residues: ATP synthase subunit b (167 aa).

The chain crosses the membrane as a helical span at residues S7–A25.

This sequence belongs to the ATPase B chain family. F-type ATPases have 2 components, F(1) - the catalytic core - and F(0) - the membrane proton channel. F(1) has five subunits: alpha(3), beta(3), gamma(1), delta(1), epsilon(1). F(0) has three main subunits: a(1), b(2) and c(10-14). The alpha and beta chains form an alternating ring which encloses part of the gamma chain. F(1) is attached to F(0) by a central stalk formed by the gamma and epsilon chains, while a peripheral stalk is formed by the delta and b chains.

The protein resides in the cell inner membrane. F(1)F(0) ATP synthase produces ATP from ADP in the presence of a proton or sodium gradient. F-type ATPases consist of two structural domains, F(1) containing the extramembraneous catalytic core and F(0) containing the membrane proton channel, linked together by a central stalk and a peripheral stalk. During catalysis, ATP synthesis in the catalytic domain of F(1) is coupled via a rotary mechanism of the central stalk subunits to proton translocation. Functionally, component of the F(0) channel, it forms part of the peripheral stalk, linking F(1) to F(0). In Rickettsia prowazekii (strain Madrid E), this protein is ATP synthase subunit b.